The sequence spans 333 residues: Protein translocase subunit SecF (333 aa).

Transmembrane regions (helical) follow at residues 27 to 47, 152 to 172, 180 to 200, 207 to 227, 253 to 275, and 285 to 307; these read AIVM…NFGI, VWTA…YIWV, LGAV…FAVL, TTVA…VVVF, TLSR…LIWG, and AMVW…IVLF.

Belongs to the SecD/SecF family. SecF subfamily. As to quaternary structure, forms a complex with SecD. Part of the essential Sec protein translocation apparatus which comprises SecA, SecYEG and auxiliary proteins SecDF-YajC and YidC.

Its subcellular location is the cell inner membrane. Part of the Sec protein translocase complex. Interacts with the SecYEG preprotein conducting channel. SecDF uses the proton motive force (PMF) to complete protein translocation after the ATP-dependent function of SecA. This is Protein translocase subunit SecF from Rhodobacter capsulatus (strain ATCC BAA-309 / NBRC 16581 / SB1003).